The sequence spans 587 residues: A-type ATP synthase subunit A (587 aa).

Residue Gly-234 to Thr-241 participates in ATP binding.

Belongs to the ATPase alpha/beta chains family. The N-terminus (approximately residues 106-122) interacts with subunit H. Has multiple subunits with at least A(3), B(3), C, D, E(1 or 2), F, H(2), I and proteolipid K(x).

Its subcellular location is the cell membrane. The catalysed reaction is ATP + H2O + 4 H(+)(in) = ADP + phosphate + 5 H(+)(out). Its activity is regulated as follows. ATP hydrolysis is inhibited by N',N'-dicyclohexylcarbodiimide. In terms of biological role, component of the A-type ATP synthase that produces ATP from ADP in the presence of a proton gradient across the membrane. The A chain is the catalytic subunit. Hydrolyzes ATP, GTP (86% of ATPase rate) and UTP (54% of ATPase rate), has very poor activity on CTP. This Methanocaldococcus jannaschii (strain ATCC 43067 / DSM 2661 / JAL-1 / JCM 10045 / NBRC 100440) (Methanococcus jannaschii) protein is A-type ATP synthase subunit A.